We begin with the raw amino-acid sequence, 111 residues long: Nucleoid-associated protein Cpha266_1171 (111 aa).

This sequence belongs to the YbaB/EbfC family. In terms of assembly, homodimer.

The protein localises to the cytoplasm. It is found in the nucleoid. In terms of biological role, binds to DNA and alters its conformation. May be involved in regulation of gene expression, nucleoid organization and DNA protection. This Chlorobium phaeobacteroides (strain DSM 266 / SMG 266 / 2430) protein is Nucleoid-associated protein Cpha266_1171.